The chain runs to 326 residues: MKNIAIIGASGYTGAQLTALVHAESELSIQGLYVSENSLDKGRALADLYPVYSHIELTLSPLTEEAKANIVAEADAVVLATEHSVSLHLAAWFYSQGLAVFDLSGAYRFSDVAQYPKWYGFEHEYPEVLAKAVYGLAEWNAKDVAATKMIAVPGCYPTASLTALKPLKNLLTSAYPVINAVSGVTGAGRKAQLHTSFCEVSLTPYGVLGHRHQPEIATQLGQEVIFTPHLGNFKRGILATITVQLKPGTTTADVAAAYSVYDQAPLVTVKQNQFPKVDDVVLTPNCHLGWKFDESSGYLVVASAIDNLMKGAASQALQCIKIHFNL.

Cysteine 155 is a catalytic residue.

This sequence belongs to the NAGSA dehydrogenase family. Type 1 subfamily.

The protein resides in the cytoplasm. The enzyme catalyses N-acetyl-L-glutamate 5-semialdehyde + phosphate + NADP(+) = N-acetyl-L-glutamyl 5-phosphate + NADPH + H(+). It functions in the pathway amino-acid biosynthesis; L-arginine biosynthesis; N(2)-acetyl-L-ornithine from L-glutamate: step 3/4. Its function is as follows. Catalyzes the NADPH-dependent reduction of N-acetyl-5-glutamyl phosphate to yield N-acetyl-L-glutamate 5-semialdehyde. In Shewanella oneidensis (strain ATCC 700550 / JCM 31522 / CIP 106686 / LMG 19005 / NCIMB 14063 / MR-1), this protein is N-acetyl-gamma-glutamyl-phosphate reductase.